A 302-amino-acid chain; its full sequence is Merozoite surface protein 2 (302 aa).

Positions 1-20 (MKVIKTLSIINFFIFVTFNI) are cleaved as a signal peptide. N-linked (GlcNAc...) asparagine glycosylation is found at Asn22 and Asn36. Positions 44 to 228 (EESKPPTGAV…EQTESPELQS (185 aa)) are polymorphic region. The stretch at 55-60 (GSGAGA) is one 1; partial repeat. The interval 55–113 (GSGAGAGSGAGAVAGSGAGAVAGSGAGAVAGSGAGAVAGSGAGAVAGSGAGAVAGSGAG) is 8 X 8 AA tandem repeats of G-S-G-A-G-A-V-A. 6 tandem repeats follow at residues 61-68 (GSGAGAVA), 69-76 (GSGAGAVA), 77-84 (GSGAGAVA), 85-92 (GSGAGAVA), 93-100 (GSGAGAVA), and 101-108 (GSGAGAVA). The 8; partial repeat unit spans residues 109 to 113 (GSGAG). The disordered stretch occupies residues 114-263 (NGANPGADAE…DSQKECTDGN (150 aa)). Over residues 125–150 (SPSTPATTTTTTTTNDAEASTSTSSE) the composition is skewed to low complexity. Residues 151–167 (NRNHNNAETNPKGKGEV) are compositionally biased toward basic and acidic residues. Composition is skewed to polar residues over residues 169 to 195 (KPNQANKETQNNSNVQQDSQTKSNVPR) and 202 to 230 (KSPTAQPEQAENSAPTAEQTESPELQSAP). A glycan (N-linked (GlcNAc...) asparagine) is linked at Asn179. Asn251 carries N-linked (GlcNAc...) asparagine glycosylation. A disulfide bridge connects residues Cys259 and Cys267. N-linked (GlcNAc...) asparagine glycosylation is found at Asn275 and Asn276. Residue Asn276 is the site of GPI-anchor amidated asparagine attachment. Residues 277–302 (SSNIASINKFVVLISATLVLSFAIFI) constitute a propeptide, removed in mature form.

It localises to the cell membrane. Functionally, may play a role in the merozoite attachment to the erythrocyte. This is Merozoite surface protein 2 from Plasmodium falciparum (isolate tak 9).